The chain runs to 276 residues: MIVNYSSSSSEEESGSSSSPSGKRQKLDTETSEALDHGSAQRKVCKSSHLTPRLPLPESVKEMFRDSEELWTDKSEEHGGRLRSFQHERGNWATYVFFPYDPEEAFLEVLNKMMAAAEAHDIPLTVSEEFHLSLSKTVVLRHHWIQPFVQSIRTSLTHFQKFYCVAYKLKVYSNAEKTRTFLGMEVSTGTPHLLELSKIVDETMKEFNLSTFYEDPSFHISLAWCVGDQTERLKKACLLELQGLIDAHEDGPFHARLNCNELRCKTGNKVFVFPLQ.

The interval 1–58 (MIVNYSSSSSEEESGSSSSPSGKRQKLDTETSEALDHGSAQRKVCKSSHLTPRLPLPE) is disordered. His-131 functions as the Proton acceptor in the catalytic mechanism. Residues 131–133 (HLS), Tyr-213, and 215–221 (DPSFHIS) contribute to the AMP site. Residues Tyr-213 and 217–221 (SFHIS) contribute to the UMP site. The active-site Proton donor is His-219.

It belongs to the 2H phosphoesterase superfamily. USB1 family.

The protein localises to the nucleus. The catalysed reaction is a 3'-end uridylyl-uridine-RNA = a 3'-end 2',3'-cyclophospho-uridine-RNA + uridine. It catalyses the reaction a 3'-end uridylyl-adenosine-RNA = a 3'-end 2',3'-cyclophospho-uridine-RNA + adenosine. In terms of biological role, 3'-5' RNA exonuclease that trims the 3' end of oligo(U) and oligo(A) tracts of the pre-U6 small nuclear RNA (snRNA) molecule, leading to the formation of a mature U6 snRNA 3' end-terminated with a 2',3'-cyclic phosphate. Participates in the U6 snRNA 3' end processing that prevents U6 snRNA degradation. In addition also removes uridines from the 3' end of U6atac snRNA and possibly the vault RNA VTRNA1-1. This Danio rerio (Zebrafish) protein is U6 snRNA phosphodiesterase 1.